The primary structure comprises 547 residues: Sterol carrier protein 2 (547 aa).

S3 is subject to Phosphoserine. N6-acetyllysine; alternate is present on K132. K132 carries the N6-succinyllysine; alternate modification. K168 is modified (N6-succinyllysine). N6-acetyllysine occurs at positions 173 and 177. An N6-acetyllysine; alternate modification is found at K183. K183 carries the N6-succinyllysine; alternate modification. At K282 the chain carries N6-succinyllysine. N6-acetyllysine; alternate is present on residues K341, K432, K438, K443, and K453. An N6-succinyllysine; alternate mark is found at K341, K432, K438, K443, and K453. The SCP2 domain occupies 433–543; it reads ANLVFKEIEK…KLQNLQLQPG (111 aa). Position 464 is an N6-succinyllysine (K464). An N6-acetyllysine; alternate modification is found at K470. K470 carries the N6-succinyllysine; alternate modification. K479 bears the N6-succinyllysine mark. K491 carries the post-translational modification N6-acetyllysine. N6-succinyllysine is present on residues K492 and K511. The residue at position 516 (S516) is a Phosphoserine. N6-succinyllysine is present on residues K522 and K534. The short motif at 545 to 547 is the Microbody targeting signal element; sequence AKL.

This sequence in the N-terminal section; belongs to the thiolase-like superfamily. Thiolase family. In terms of assembly, interacts with PEX5; the interaction is essential for peroxisomal import. In terms of processing, preSCP2, a protein with a molecular mass of about 15 kDa, is processed into its mature form (SCP2) by proteolytic cleavage of a 20 residue leader sequence after translocation into peroxisomes. As to expression, liver, fibroblasts, and placenta.

The protein localises to the peroxisome. It is found in the cytoplasm. It localises to the mitochondrion. Its subcellular location is the endoplasmic reticulum. It catalyses the reaction choloyl-CoA + propanoyl-CoA = 3alpha,7alpha,12alpha-trihydroxy-24-oxo-5beta-cholestan-26-oyl-CoA + CoA. It carries out the reaction 4,8,12-trimethyltridecanoyl-CoA + propanoyl-CoA = 3-oxopristanoyl-CoA + CoA. The enzyme catalyses an acyl-CoA + acetyl-CoA = a 3-oxoacyl-CoA + CoA. The catalysed reaction is hexanoyl-CoA + acetyl-CoA = 3-oxooctanoyl-CoA + CoA. It catalyses the reaction tetradecanoyl-CoA + acetyl-CoA = 3-oxohexadecanoyl-CoA + CoA. It carries out the reaction 3-oxohexadecanedioyl-CoA + CoA = tetradecanedioyl-CoA + acetyl-CoA. The enzyme catalyses propanoyl-CoA + tetradecanoyl-CoA = 3-oxo-2-methylhexadecanoyl-CoA + CoA. The catalysed reaction is butanoyl-CoA + acetyl-CoA = 3-oxohexanoyl-CoA + CoA. It catalyses the reaction octanoyl-CoA + acetyl-CoA = 3-oxodecanoyl-CoA + CoA. It carries out the reaction decanoyl-CoA + acetyl-CoA = 3-oxododecanoyl-CoA + CoA. The enzyme catalyses dodecanoyl-CoA + acetyl-CoA = 3-oxotetradecanoyl-CoA + CoA. The catalysed reaction is hexadecanoyl-CoA + acetyl-CoA = 3-oxooctadecanoyl-CoA + CoA. It catalyses the reaction 3-oxo-(9Z-octadecenoyl)-CoA + CoA = (7Z)-hexadecenoyl-CoA + acetyl-CoA. It carries out the reaction 7-dehydrocholesterol(in) = 7-dehydrocholesterol(out). Functionally, plays a crucial role in the peroxisomal oxidation of branched-chain fatty acids. Catalyzes the last step of the peroxisomal beta-oxidation of branched chain fatty acids and the side chain of the bile acid intermediates di- and trihydroxycoprostanic acids (DHCA and THCA). Also active with medium and long straight chain 3-oxoacyl-CoAs. Stimulates the microsomal conversion of 7-dehydrocholesterol to cholesterol and transfers phosphatidylcholine and 7-dehydrocholesterol between membrances, in vitro. Isoforms SCP2 and SCPx cooperate in peroxisomal oxidation of certain naturally occurring tetramethyl-branched fatty acyl-CoAs. Its function is as follows. Mediates the transfer of all common phospholipids, cholesterol and gangliosides from the endoplasmic reticulum to the plasma membrane. May play a role in regulating steroidogenesis. Stimulates the microsomal conversion of 7-dehydrocholesterol to cholesterol. Also binds fatty acids and fatty acyl Coenzyme A (CoA) such as phytanoyl-CoA. Involved in the regulation phospholipid synthesis in endoplasmic reticulum enhancing the incorporation of exogenous fatty acid into glycerides. Seems to stimulate the rate-limiting step in phosphatidic acid formation mediated by GPAT3. Isoforms SCP2 and SCPx cooperate in peroxisomal oxidation of certain naturally occurring tetramethyl-branched fatty acyl-CoAs. This chain is Sterol carrier protein 2, found in Homo sapiens (Human).